Here is a 283-residue protein sequence, read N- to C-terminus: Hydrogenase expression/formation protein HoxQ (283 aa).

Positions 1 to 29 (MNDDLPILPPGFGPGSHGEEERPDCPSMP) are disordered.

The protein belongs to the HupH/HyaF family.

The protein is Hydrogenase expression/formation protein HoxQ (hoxQ) of Azotobacter vinelandii.